The following is an 84-amino-acid chain: Small ribosomal subunit protein uS17 (84 aa).

It belongs to the universal ribosomal protein uS17 family. Part of the 30S ribosomal subunit.

In terms of biological role, one of the primary rRNA binding proteins, it binds specifically to the 5'-end of 16S ribosomal RNA. The polypeptide is Small ribosomal subunit protein uS17 (Yersinia enterocolitica serotype O:8 / biotype 1B (strain NCTC 13174 / 8081)).